A 593-amino-acid chain; its full sequence is Cryptochrome-2 (593 aa).

The Photolyase/cryptochrome alpha/beta domain occupies 22 to 151 (ASSVHWFRKG…EVVTENSHTL (130 aa)). Lys30 is covalently cross-linked (Glycyl lysine isopeptide (Lys-Gly) (interchain with G-Cter in ubiquitin)). Ser90 carries the phosphoserine modification. Residues Lys126 and Lys242 each participate in a glycyl lysine isopeptide (Lys-Gly) (interchain with G-Cter in ubiquitin) cross-link. At Ser266 the chain carries Phosphoserine; by MAPK. Ser271 is a binding site for FAD. Ser299 bears the Phosphoserine mark. Gln308 contacts FAD. Lys348 is covalently cross-linked (Glycyl lysine isopeptide (Lys-Gly) (interchain with G-Cter in ubiquitin)). Residues His374 and 406 to 408 (DAD) each bind FAD. The required for inhibition of CLOCK-BMAL1-mediated transcription stretch occupies residues 390–489 (WVSWESGVRV…IIGVDYPRPI (100 aa)). Residues Lys475 and Lys504 each participate in a glycyl lysine isopeptide (Lys-Gly) (interchain with G-Cter in ubiquitin) cross-link. Positions 532-593 (PVAEPSSSQA…PTPELPSKDA (62 aa)) are disordered. Low complexity predominate over residues 537 to 548 (SSSQAGSMSSAG). Ser554 is subject to Phosphoserine; by GSK3-beta. Phosphoserine; by DYRK1A and MAPK is present on Ser558.

Belongs to the DNA photolyase class-1 family. As to quaternary structure, component of the circadian core oscillator, which includes the CRY proteins, CLOCK or NPAS2, BMAL1 or BMAL2, CSNK1D and/or CSNK1E, TIMELESS, and the PER proteins. Interacts with TIMELESS. Interacts directly with PER1, PER2 and PER3; interaction with PER2 inhibits its ubiquitination and vice versa. Interacts with CLOCK-BMAL1. Interacts with CLOCK. Interacts with BMAL1. Interacts with NFIL3. Interacts with FBXL3. Interacts with FBXL21. FBXL3, PER2 and the cofactor FAD compete for overlapping binding sites. FBXL3 cannot bind CRY2 that interacts already with PER2 or that contains bound FAD. Interacts with PPP5C (via TPR repeats); the interaction down-regulates the PPP5C phosphatase activity on CSNK1E. Interacts with nuclear receptors AR and NR3C1/GR; the interaction is ligand dependent. Interacts with PRKDC and CIART. Interacts with ISCA1 (in vitro). Interacts with DDB1, USP7 and TARDBP. Interacts with HNF4A. Interacts with PPARA. Interacts with PPARD (via domain NR LBD) and NR1I2 (via domain NR LBD) in a ligand-dependent manner. Interacts with PPARG, NR1I3 and VDR in a ligand-dependent manner. FAD serves as cofactor. Requires (6R)-5,10-methylene-5,6,7,8-tetrahydrofolate as cofactor. In terms of processing, phosphorylation on Ser-266 by MAPK is important for the inhibition of CLOCK-BMAL1-mediated transcriptional activity. Phosphorylation by CSKNE requires interaction with PER1 or PER2. Phosphorylated in a circadian manner at Ser-554 and Ser-558 in the suprachiasmatic nucleus (SCN) and liver. Phosphorylation at Ser-558 by DYRK1A promotes subsequent phosphorylation at Ser-554 by GSK3-beta: the two-step phosphorylation at the neighboring Ser residues leads to its proteasomal degradation. Post-translationally, ubiquitinated by the SCF(FBXL3) and SCF(FBXL21) complexes, regulating the balance between degradation and stabilization. The SCF(FBXL3) complex is mainly nuclear and mediates ubiquitination and subsequent degradation of CRY2. In contrast, cytoplasmic SCF(FBXL21) complex-mediated ubiquitination leads to stabilize CRY2 and counteract the activity of the SCF(FBXL3) complex. The SCF(FBXL3) and SCF(FBXL21) complexes probably mediate ubiquitination at different Lys residues. The SCF(FBXL3) complex recognizes and binds CRY2 phosphorylated at Ser-554 and Ser-558. Ubiquitination may be inhibited by PER2. Deubiquitinated by USP7. As to expression, expressed in all tissues examined including fetal brain, fibroblasts, heart, brain, placenta, lung, liver, skeletal muscle, kidney, pancreas, spleen, thymus, prostate, testis, ovary, small intestine, colon and leukocytes. Highest levels in heart and skeletal muscle.

It localises to the cytoplasm. It is found in the nucleus. KL001 (N-[3-(9H-carbazol-9-yl)-2-hydroxypropyl]-N-(2-furanylmethyl)-methanesulfonamide) binds to CRY1 and stabilizes it by inhibiting FBXL3- and ubiquitin-dependent degradation of CRY1 resulting in lengthening of the circadian periods. Transcriptional repressor which forms a core component of the circadian clock. The circadian clock, an internal time-keeping system, regulates various physiological processes through the generation of approximately 24 hour circadian rhythms in gene expression, which are translated into rhythms in metabolism and behavior. It is derived from the Latin roots 'circa' (about) and 'diem' (day) and acts as an important regulator of a wide array of physiological functions including metabolism, sleep, body temperature, blood pressure, endocrine, immune, cardiovascular, and renal function. Consists of two major components: the central clock, residing in the suprachiasmatic nucleus (SCN) of the brain, and the peripheral clocks that are present in nearly every tissue and organ system. Both the central and peripheral clocks can be reset by environmental cues, also known as Zeitgebers (German for 'timegivers'). The predominant Zeitgeber for the central clock is light, which is sensed by retina and signals directly to the SCN. The central clock entrains the peripheral clocks through neuronal and hormonal signals, body temperature and feeding-related cues, aligning all clocks with the external light/dark cycle. Circadian rhythms allow an organism to achieve temporal homeostasis with its environment at the molecular level by regulating gene expression to create a peak of protein expression once every 24 hours to control when a particular physiological process is most active with respect to the solar day. Transcription and translation of core clock components (CLOCK, NPAS2, BMAL1, BMAL2, PER1, PER2, PER3, CRY1 and CRY2) plays a critical role in rhythm generation, whereas delays imposed by post-translational modifications (PTMs) are important for determining the period (tau) of the rhythms (tau refers to the period of a rhythm and is the length, in time, of one complete cycle). A diurnal rhythm is synchronized with the day/night cycle, while the ultradian and infradian rhythms have a period shorter and longer than 24 hours, respectively. Disruptions in the circadian rhythms contribute to the pathology of cardiovascular diseases, cancer, metabolic syndromes and aging. A transcription/translation feedback loop (TTFL) forms the core of the molecular circadian clock mechanism. Transcription factors, CLOCK or NPAS2 and BMAL1 or BMAL2, form the positive limb of the feedback loop, act in the form of a heterodimer and activate the transcription of core clock genes and clock-controlled genes (involved in key metabolic processes), harboring E-box elements (5'-CACGTG-3') within their promoters. The core clock genes: PER1/2/3 and CRY1/2 which are transcriptional repressors form the negative limb of the feedback loop and interact with the CLOCK|NPAS2-BMAL1|BMAL2 heterodimer inhibiting its activity and thereby negatively regulating their own expression. This heterodimer also activates nuclear receptors NR1D1/2 and RORA/B/G, which form a second feedback loop and which activate and repress BMAL1 transcription, respectively. CRY1 and CRY2 have redundant functions but also differential and selective contributions at least in defining the pace of the SCN circadian clock and its circadian transcriptional outputs. Less potent transcriptional repressor in cerebellum and liver than CRY1, though less effective in lengthening the period of the SCN oscillator. Seems to play a critical role in tuning SCN circadian period by opposing the action of CRY1. With CRY1, dispensable for circadian rhythm generation but necessary for the development of intercellular networks for rhythm synchrony. May mediate circadian regulation of cAMP signaling and gluconeogenesis by blocking glucagon-mediated increases in intracellular cAMP concentrations and in CREB1 phosphorylation. Besides its role in the maintenance of the circadian clock, is also involved in the regulation of other processes. Plays a key role in glucose and lipid metabolism modulation, in part, through the transcriptional regulation of genes involved in these pathways, such as LEP or ACSL4. Represses glucocorticoid receptor NR3C1/GR-induced transcriptional activity by binding to glucocorticoid response elements (GREs). Represses the CLOCK-BMAL1 induced transcription of BHLHE40/DEC1. Represses the CLOCK-BMAL1 induced transcription of NAMPT. Represses PPARD and its target genes in the skeletal muscle and limits exercise capacity. Represses the transcriptional activity of NR1I2. This is Cryptochrome-2 (CRY2) from Homo sapiens (Human).